A 333-amino-acid chain; its full sequence is MIDTTLPLTDIHRHLDGNIRPQTILELGRQYNISLPAQSLETLIPHVQVIANEPDLVSFLTKLDWGVKVLASLDACRRVAFENIEDAARNGLHYVELRFSPGYMAMAHQLPVAGVVEAVIDGVREGCRTFGVQAKLIGIMSRTFGEAACQQELEAFLAHRDQITALDLAGDELGFPGSLFLSHFNRARDAGWHITVHAGEAAGPESIWQAIRELGAERIGHGVKAIEDRALMDFLAEQQIGIESCLTSNIQTSTVAELAAHPLKTFLEHGIRASINTDDPGVQGVDIIHEYTVAAPAAGLSREQIRQAQINGLEMAFLSAEEKRALREKVAAK.

H12 and H14 together coordinate Zn(2+). Substrate contacts are provided by H14, D16, and G170. H197 is a Zn(2+) binding site. The active-site Proton donor is E200. Residue D278 participates in Zn(2+) binding. D279 serves as a coordination point for substrate.

The protein belongs to the metallo-dependent hydrolases superfamily. Adenosine and AMP deaminases family. Adenosine deaminase subfamily. It depends on Zn(2+) as a cofactor.

It carries out the reaction adenosine + H2O + H(+) = inosine + NH4(+). The catalysed reaction is 2'-deoxyadenosine + H2O + H(+) = 2'-deoxyinosine + NH4(+). In terms of biological role, catalyzes the hydrolytic deamination of adenosine and 2-deoxyadenosine. The sequence is that of Adenosine deaminase from Shigella sonnei (strain Ss046).